The primary structure comprises 523 residues: MLFAKAFQSATVAGAVILAALVDVAHSTPLDDPGQCGLEAVAQCCTSLRESAVGDKVFAYGDIEYFRAKRSYYSVTTSLNSACIVLPESAEDVSTVLTTLTQPDLAETCPFAIRSGGHSMVVGFSDIAAGVTLDLSKLNHTIYHPETETVSLGPGGRWVNVYEELRPDNVMVSGGRFSSVGVGGFLTGGGITIYSAQRGLACDDVVSFDVVLANGTLIQATNATNPDLFHTLKGGSGNLGVVTNFEVRAFPQTQIWGGYTSYNVSKTPELARTLQNFTSNIEQDPKALLVTFWTYDTLTDVNRAANAMYYTDPVEYPEAFNDYYAIENISSTVHTRSIESLVTELEDTTNWFRVLFVTLAFKNDARVIEHGANLYQEYIDTIKANVSGGDWLVIAGFQPMPTLFGTSGQENGGNIIGLENNGDKIVLLFEAFWERTQDDELFEPLADELIHNLEEYARSLEQDSDFLYLNYADGWQDPISGYGGDNIEQLRAAAEKYDPNGVFQTQVPGGFKISKVPVAEQKK.

An FAD-binding PCMH-type domain is found at 77–252 (TSLNSACIVL…TNFEVRAFPQ (176 aa)).

Belongs to the oxygen-dependent FAD-linked oxidoreductase family. The cofactor is FAD.

It functions in the pathway secondary metabolite biosynthesis; terpenoid biosynthesis. In terms of biological role, FAD-dependent monooxygenase; part of the gene cluster that mediates the biosynthesis of various drimane-type sesquiterpene esters, compounds that exhibit diverse biological activities and are widely present in eukaryotes. The pathway begins with the synthesis of the backbone drimenol by the terpene cyclase drtB using farnesyl pyrophosphate (FPP) as substrate. The cytochrome P450 monooxygenase drtD is then responsible for the hydroxylations at C-6, C-9 and C-12, as well as the oxidation of hydroxyl groups at C-6 and C-11 to a ketone and an aldehyde, respectively. Then, the biosynthesis can go in two directions, either the hydroxylated drimenol is further hydroxylated at C-2 and C-3 by an enzyme(s) not associated with the drt cluster, or the FAD-binding oxidoreductase drtC further oxidizes C-11 or C-12 to form the butyrolactone ring. DrtB, drtD and drtC are solely responsible for the formation of the different drimane structures observed during drimane sesquiterpenes biosynthesis. The polyketide synthase drtA synthesizes different lengths (C6 and C8) of PKS chains, which are then oxidized to varying degrees by the short-chain dehydrogenase drtF. Finally, these PKS chains are transferred onto drimane sesquiterpenes by the acyltransferase drtE, forming the sesquiterpene esters. In addition to the different fatty acyl-CoA chains produced by drtA, drtE is also able to use cinnamoyl-CoA as a substrate. This chain is FAD-dependent monooxygenase drtC, found in Aspergillus calidoustus.